The chain runs to 160 residues: 2-C-methyl-D-erythritol 2,4-cyclodiphosphate synthase (160 aa).

Residues aspartate 9 and histidine 11 each contribute to the a divalent metal cation site. Residues 9–11 (DVH) and 35–36 (HS) each bind 4-CDP-2-C-methyl-D-erythritol 2-phosphate. Histidine 43 contributes to the a divalent metal cation binding site. 4-CDP-2-C-methyl-D-erythritol 2-phosphate-binding positions include 57–59 (DIG), 62–66 (FPDTD), 101–107 (AEAPKMA), 133–136 (TTSE), phenylalanine 140, and arginine 143.

It belongs to the IspF family. In terms of assembly, homotrimer. It depends on a divalent metal cation as a cofactor.

It catalyses the reaction 4-CDP-2-C-methyl-D-erythritol 2-phosphate = 2-C-methyl-D-erythritol 2,4-cyclic diphosphate + CMP. It functions in the pathway isoprenoid biosynthesis; isopentenyl diphosphate biosynthesis via DXP pathway; isopentenyl diphosphate from 1-deoxy-D-xylulose 5-phosphate: step 4/6. Involved in the biosynthesis of isopentenyl diphosphate (IPP) and dimethylallyl diphosphate (DMAPP), two major building blocks of isoprenoid compounds. Catalyzes the conversion of 4-diphosphocytidyl-2-C-methyl-D-erythritol 2-phosphate (CDP-ME2P) to 2-C-methyl-D-erythritol 2,4-cyclodiphosphate (ME-CPP) with a corresponding release of cytidine 5-monophosphate (CMP). The sequence is that of 2-C-methyl-D-erythritol 2,4-cyclodiphosphate synthase from Methylobacillus flagellatus (strain ATCC 51484 / DSM 6875 / VKM B-1610 / KT).